A 369-amino-acid polypeptide reads, in one-letter code: mRNA cap guanine-N(7) methyltransferase 1 (369 aa).

The tract at residues 1-55 (MNKRPRDEPSSSFASAPKRQYGAGGGGYGGHGYSEERSSARRVADHYSARSNQTL) is disordered. Residues 22–32 (GAGGGGYGGHG) show a composition bias toward gly residues. The span at 33–48 (YSEERSSARRVADHYS) shows a compositional bias: basic and acidic residues. One can recognise an mRNA cap 0 methyltransferase domain in the interval 61-340 (SPIIHLKKLN…LYLAFVLRKR (280 aa)). Position 70-71 (70-71 (NN)) interacts with mRNA. S-adenosyl-L-methionine-binding positions include lysine 74, alanine 92, aspartate 114, 149 to 150 (DC), and 171 to 173 (QFA).

It belongs to the class I-like SAM-binding methyltransferase superfamily. mRNA cap 0 methyltransferase family.

Its subcellular location is the nucleus. It carries out the reaction a 5'-end (5'-triphosphoguanosine)-ribonucleoside in mRNA + S-adenosyl-L-methionine = a 5'-end (N(7)-methyl 5'-triphosphoguanosine)-ribonucleoside in mRNA + S-adenosyl-L-homocysteine. In terms of biological role, mRNA-capping methyltransferase that methylates the N7 position of the added guanosine to the 5'-cap structure of mRNAs. Binds RNA containing 5'-terminal GpppC. This chain is mRNA cap guanine-N(7) methyltransferase 1, found in Oryza sativa subsp. japonica (Rice).